The primary structure comprises 273 residues: SUMO-1 cysteine protease S273R (273 aa).

Residues His-168 and Asn-187 contribute to the active site. Gln-226 serves as a coordination point for substrate. The Nucleophile role is filled by Cys-232.

This sequence belongs to the peptidase C63 family.

The protein localises to the host cytoplasm. Its subcellular location is the virion. Functionally, cysteine protease that plays several role during infection including processing of the structural polyprotein or inhibition of the host immune response. Catalyzes the maturation of the pp220 and pp62 polyprotein precursors into core-shell proteins. Plays a role in the disruption of host pyroptosis via specific cleavage of gasdermin D/GSDMD. In addition, strongly decreases the host cGAS-STING signaling by targeting IKBKE via its enzymatic activity. Also impairs host FOXJ1-mediated antiviral effect via degradation of FOXJ1. The sequence is that of SUMO-1 cysteine protease S273R from Ornithodoros (relapsing fever ticks).